Reading from the N-terminus, the 673-residue chain is Auxin response factor 9 (673 aa).

The segment at residues 126–228 is a DNA-binding region (TF-B3); sequence FCKTLTASDT…ELRVGVRRLM (103 aa). 2 disordered regions span residues 356–386 and 514–545; these read ELEP…PSVV and DSDQ…QSRQ. A compositionally biased stretch (polar residues) spans 516–545; sequence DQISQPSNGNKSDAPGTSSERSPLESQSRQ. Residues 547–639 enclose the PB1 domain; it reads RSCTKVIMQG…EEAKLLAPKS (93 aa).

This sequence belongs to the ARF family. Homodimers and heterodimers. Expressed in roots, culms, leaves and young panicles.

The protein localises to the nucleus. Its function is as follows. Auxin response factors (ARFs) are transcriptional factors that bind specifically to the DNA sequence 5'-TGTCTC-3' found in the auxin-responsive promoter elements (AuxREs). This Oryza sativa subsp. japonica (Rice) protein is Auxin response factor 9 (ARF9).